We begin with the raw amino-acid sequence, 694 residues long: Phosphatase and actin regulator 4 (694 aa).

Disordered regions lie at residues 1 to 354 and 375 to 405; these read MEDP…SPLV and QDIS…PSRL. The segment covering 45–54 has biased composition (basic residues); it reads KPWKWRKKKS. The span at 55 to 84 shows a compositional bias: basic and acidic residues; it reads SDKFKETSEVLERKISMRKPREELVKRGVL. An RPEL 1 repeat occupies 63–88; sequence EVLERKISMRKPREELVKRGVLLEDP. A phosphoserine mark is found at Ser116, Ser118, Ser129, and Ser145. Low complexity-rich tracts occupy residues 184–209 and 231–249; these read AGST…TAAT and TLPA…TAPA. Positions 250-259 are enriched in pro residues; it reads KQPPIPPPKP. Phosphoserine is present on residues Ser264, Ser285, Ser335, and Ser337. A compositionally biased stretch (pro residues) spans 329–352; that stretch reads LIIPPSSPSPPLPTHIPPEPPRSP. Basic and acidic residues predominate over residues 381–392; sequence EDQKTEVPKKIQ. Ser420 carries the phosphoserine modification. A Phosphothreonine modification is found at Thr425. A phosphoserine mark is found at Ser436, Ser446, Ser457, Ser503, Ser505, Ser549, and Ser582. The tract at residues 467–562 is disordered; sequence VPDDEEEEQT…TNLNSWPRKS (96 aa). The segment covering 546-559 has biased composition (polar residues); the sequence is SRPSEPETNLNSWP. RPEL repeat units lie at residues 575–600 and 613–638; these read NTLI…QPKN and RRLT…RFNE. The tract at residues 589 to 608 is disordered; it reads ELEQRNILQPKNEADRQAEK. A Phosphoserine modification is found at Ser620.

Belongs to the phosphatase and actin regulator family. As to quaternary structure, binds PPP1CA and actin.

It is found in the cytoplasm. Its subcellular location is the cell projection. The protein resides in the lamellipodium. Regulator of protein phosphatase 1 (PP1) required for neural tube and optic fissure closure, and enteric neural crest cell (ENCCs) migration during development. Acts as an activator of PP1 by interacting with PPP1CA and preventing phosphorylation of PPP1CA at 'Thr-320'. During neural tube closure, localizes to the ventral neural tube and activates PP1, leading to down-regulate cell proliferation within cranial neural tissue and the neural retina. Also acts as a regulator of migration of enteric neural crest cells (ENCCs) by activating PP1, leading to dephosphorylation and subsequent activation of cofilin (COF1 or COF2) and repression of the integrin signaling through the RHO/ROCK pathway. This is Phosphatase and actin regulator 4 (Phactr4) from Mus musculus (Mouse).